Here is a 204-residue protein sequence, read N- to C-terminus: Partner of Y14 and mago (204 aa).

Disordered regions lie at residues 1–121 and 133–153; these read MGSR…QSVN and SSNN…EDVE. Over residues 7-36 the composition is skewed to basic and acidic residues; that stretch reads EQGKRMAELSKNLKEGERILEPTRRPDGTL. Residues 104–121 show a composition bias toward polar residues; the sequence is KANSSEDGSASNGSQSVN. The Nuclear export signal signature appears at 195-200; sequence ELKALE.

Belongs to the pym family. As to quaternary structure, interacts with MAGO and Y14. As to expression, expressed in root and shoot meristems, cotyledons, vascular tissues of leaves, receptacle of flowers and siliques, and pollen grains.

It is found in the cytoplasm. Its subcellular location is the nucleus. The protein localises to the nucleolus. It localises to the nucleoplasm. Functionally, key regulator of the exon junction complex (EJC), a multiprotein complex that associates immediately upstream of the exon-exon junction on mRNAs and serves as a positional landmark for the intron exon structure of genes and directs post-transcriptional processes in the cytoplasm such as mRNA export, nonsense-mediated mRNA decay (NMD) or translation. Acts as an EJC disassembly factor, allowing translation-dependent EJC removal and recycling by disrupting mature EJC from spliced mRNAs. Can increase in vitro the expression from reporter constructs that contain leader introns required for the expression of different genes. In association with MAGO and PYM, participates in intron-mediated enhancement of gene expression. This Arabidopsis thaliana (Mouse-ear cress) protein is Partner of Y14 and mago.